We begin with the raw amino-acid sequence, 1666 residues long: Latent-transforming growth factor beta-binding protein 4 (1666 aa).

The first 24 residues, 1 to 24, serve as a signal peptide directing secretion; sequence MRRPGLGGPCPLLLLLLLPAATSA. The region spanning 148 to 180 is the EGF-like 1 domain; sequence ARVLCPLICHNGGVCVKPDRCLCPPDFAGKFCQ. 6 disulfides stabilise this stretch: Cys152–Cys162, Cys156–Cys168, Cys170–Cys179, Cys288–Cys310, Cys297–Cys323, and Cys311–Cys326. Positions 286-338 constitute a TB 1 domain; that stretch reads GYCFRELRGSECASPLPGLRTQEVCCRGEGLAWGVHDCHPCAEHLRNSNQVSG. Asn351 is a glycosylation site (N-linked (GlcNAc...) asparagine). The region spanning 356–396 is the EGF-like 2; calcium-binding domain; sequence DVDECATGGRCQHGECANTRGGYTCVCPDGFLLDSSRSSCI. 7 cysteine pairs are disulfide-bonded: Cys360–Cys371, Cys366–Cys380, Cys382–Cys395, Cys408–Cys430, Cys417–Cys443, Cys431–Cys446, and Cys432–Cys458. The region spanning 406–458 is the TB 2 domain; it reads GPCYRVLHDGGCSLPILRNITKQICCCSRVGKAWGRGCQLCPPYGSEGFREIC. Asn424 carries N-linked (GlcNAc...) asparagine glycosylation. A disordered region spans residues 473–590; it reads YNTRPLNQDP…EIPESGPSSS (118 aa). Residues 491 to 502 are compositionally biased toward pro residues; the sequence is RVPPATPRPPTG. The segment covering 521-561 has biased composition (basic and acidic residues); sequence PRPRPEPRPRPESRPRPEPRPRPEPRPQPESQPRPESRPRP. Positions 562 to 573 are enriched in pro residues; the sequence is ESQPWPEFPLPS. The segment covering 579 to 590 has biased composition (low complexity); that stretch reads GPEIPESGPSSS. Residues 588–629 form the EGF-like 3 domain; the sequence is SSSMCQRNPQVCGPGRCVPRPSGYTCACDPGFRLGPQGTRCI. 30 cysteine pairs are disulfide-bonded: Cys592/Cys604, Cys599/Cys613, Cys615/Cys628, Cys634/Cys646, Cys641/Cys655, Cys657/Cys670, Cys676/Cys688, Cys683/Cys697, Cys699/Cys712, Cys718/Cys730, Cys725/Cys739, Cys741/Cys750, Cys757/Cys769, Cys764/Cys778, Cys780/Cys793, Cys799/Cys811, Cys806/Cys820, Cys822/Cys835, Cys881/Cys893, Cys887/Cys902, Cys904/Cys918, Cys924/Cys936, Cys930/Cys945, Cys947/Cys960, Cys966/Cys977, Cys972/Cys986, Cys988/Cys1001, Cys1095/Cys1107, Cys1101/Cys1116, and Cys1118/Cys1131. The region spanning 630 to 671 is the EGF-like 4; calcium-binding domain; it reads DIDECRRVPTPCAPGRCENTPGSFRCVCGTGFQAGPRATECL. Residues 672–713 enclose the EGF-like 5; calcium-binding domain; it reads DVDECRRVPPPCDRGRCENTPGSFLCVCPAGYQAAPHGASCQ. Residues 714 to 751 form the EGF-like 6; calcium-binding domain; sequence DVDECTQSPGLCGRGVCENLPGSFRCVCPAGFRGSACE. One can recognise an EGF-like 7; calcium-binding domain in the interval 753–794; sequence DVDECAQQPPPCGPGRCDNTAGSFHCACPAGFRSRGPGAPCQ. The 42-residue stretch at 795–836 folds into the EGF-like 8; calcium-binding domain; sequence DVDECSRSPSPCAYGRCENTEGSFKCVCPTGFQPNAAGSECE. The EGF-like 9; calcium-binding domain maps to 877–919; that stretch reads DVDECSSGTPCGLHGQCTNTKGSFHCSCSTGYRAPSGQPGPCA. Positions 920 to 961 constitute an EGF-like 10; calcium-binding domain; that stretch reads DINECLEGDFCFPHGECLNTDGSFTCTCAPGYRPGPRGASCL. The EGF-like 11; calcium-binding domain maps to 962–1002; the sequence is DVDECSEEDLCQSGICTNTDGSFECICPPGHRAGPDLASCL. In terms of domain architecture, EGF-like 12; calcium-binding spans 1091–1132; the sequence is DVDECRNRSFCGAHAMCQNLPGSFQCVCDQGYEGARDGRHCV. An N-linked (GlcNAc...) asparagine glycan is attached at Asn1097. Residues 1171–1221 are disordered; that stretch reads TGRCVPPRAPAGTFPGSQPQAPASPSLPARPPAPPPPRRPSPPRQGPVSSG. The segment covering 1185–1197 has biased composition (low complexity); that stretch reads PGSQPQAPASPSL. Over residues 1198 to 1215 the composition is skewed to pro residues; that stretch reads PARPPAPPPPRRPSPPRQ. One can recognise a TB 3 domain in the interval 1223-1277; the sequence is RECYFDTAAPDACDNILARNVTWQECCCTVGEGWGSGCRIQQCPGTETAEYQSLC. Cystine bridges form between Cys1225–Cys1248, Cys1235–Cys1260, Cys1249–Cys1265, Cys1250–Cys1277, Cys1299–Cys1312, Cys1307–Cys1321, Cys1323–Cys1336, Cys1342–Cys1354, Cys1349–Cys1363, and Cys1365–Cys1378. Asn1242 carries an N-linked (GlcNAc...) asparagine glycan. Residues 1295–1337 form the EGF-like 13; calcium-binding domain; that stretch reads DVDECQLFQDQVCKSGVCVNTAPGYSCYCSNGFYYHAHRLECV. An EGF-like 14; calcium-binding domain is found at 1338–1379; sequence DNDECADEEPACEGGRCVNTVGSYHCTCEPPLVLDGSRRRCV. The N-linked (GlcNAc...) asparagine glycan is linked to Asn1381. The 54-residue stretch at 1391 to 1444 folds into the TB 4 domain; sequence GVCWQEVGPDLVCSRPRLDRQATYTECCCLYGEAWGMDCALCPAQDSDDFEALC. 4 disulfides stabilise this stretch: Cys1393–Cys1417, Cys1403–Cys1429, Cys1418–Cys1432, and Cys1419–Cys1444. A compositionally biased stretch (pro residues) spans 1488 to 1500; that stretch reads VLPYDPYPPPPGP. The interval 1488-1566 is disordered; sequence VLPYDPYPPP…SSERGSYTGA (79 aa). At Thr1564 the chain carries Phosphothreonine. EGF-like domains are found at residues 1575–1615 and 1616–1660; these read EAEE…MSCV and DVNE…HHCA. Disulfide bonds link Cys1579-Cys1590, Cys1585-Cys1599, Cys1601-Cys1614, Cys1620-Cys1635, Cys1630-Cys1644, and Cys1646-Cys1659.

It belongs to the LTBP family. Forms part of the large latent transforming growth factor beta precursor complex; removal is essential for activation of complex. Interacts with LTBP1 and TGFB1. Interacts with EFEMP2; this interaction promotes fibrillar deposition of EFEMP2. In terms of processing, contains hydroxylated asparagine residues.

It is found in the secreted. Its subcellular location is the extracellular space. The protein localises to the extracellular matrix. Its function is as follows. Key regulator of transforming growth factor beta (TGFB1, TGFB2 and TGFB3) that controls TGF-beta activation by maintaining it in a latent state during storage in extracellular space. Associates specifically via disulfide bonds with the Latency-associated peptide (LAP), which is the regulatory chain of TGF-beta, and regulates integrin-dependent activation of TGF-beta. The chain is Latent-transforming growth factor beta-binding protein 4 (Ltbp4) from Mus musculus (Mouse).